Consider the following 270-residue polypeptide: Monocyte to macrophage differentiation factor 2 (270 aa).

Residues 1-38 (MFAPRLLDFQKTKYARFMNHRVPAHKRYQPTEYEHAAN) lie on the Cytoplasmic side of the membrane. The helical transmembrane segment at 39-59 (CATHAFWIIPSILGSSNLYFL) threads the bilayer. Residues 60–65 (SDDDWE) are Lumenal-facing. A helical membrane pass occupies residues 66–86 (TISAWIYGLGLCGLFVVSTVF). Residues 87-102 (HTISWKKSHLRMVEHC) lie on the Cytoplasmic side of the membrane. The chain crosses the membrane as a helical span at residues 103–123 (LHMFDRMVIYFFIAASYAPWL). Residues 124-132 (NLRELGPWA) lie on the Lumenal side of the membrane. Residues 133 to 153 (SHMRWLVWIMASVGTIYVFFF) form a helical membrane-spanning segment. The Cytoplasmic portion of the chain corresponds to 154 to 182 (HERTGSCVQFLRGEACPKAGTACLPARYK). Residues 183 to 203 (LVELLCYVVMGFFPALVILSM) form a helical membrane-spanning segment. Over 204–205 (PN) the chain is Lumenal. Residues 206 to 226 (TEGIWELVTGGVFYCLGMVFF) traverse the membrane as a helical segment. The Cytoplasmic portion of the chain corresponds to 227 to 233 (KSDGRIP). The chain crosses the membrane as a helical span at residues 234–254 (FAHAIWHLFVAFGAGTHYYAI). Topologically, residues 255-270 (WRYLYLPSTLQTKVSK) are lumenal.

Belongs to the ADIPOR family. As to expression, shows restricted expression with highest levels in brain and testis.

The protein resides in the golgi apparatus membrane. The protein is Monocyte to macrophage differentiation factor 2 of Homo sapiens (Human).